A 302-amino-acid polypeptide reads, in one-letter code: 4-hydroxy-tetrahydrodipicolinate synthase (302 aa).

Threonine 55 contacts pyruvate. Catalysis depends on tyrosine 144, which acts as the Proton donor/acceptor. Lysine 172 serves as the catalytic Schiff-base intermediate with substrate. Valine 214 serves as a coordination point for pyruvate.

This sequence belongs to the DapA family. In terms of assembly, homotetramer; dimer of dimers.

It localises to the cytoplasm. The catalysed reaction is L-aspartate 4-semialdehyde + pyruvate = (2S,4S)-4-hydroxy-2,3,4,5-tetrahydrodipicolinate + H2O + H(+). Its pathway is amino-acid biosynthesis; L-lysine biosynthesis via DAP pathway; (S)-tetrahydrodipicolinate from L-aspartate: step 3/4. Its function is as follows. Catalyzes the condensation of (S)-aspartate-beta-semialdehyde [(S)-ASA] and pyruvate to 4-hydroxy-tetrahydrodipicolinate (HTPA). This Prochlorococcus marinus (strain MIT 9313) protein is 4-hydroxy-tetrahydrodipicolinate synthase.